A 474-amino-acid chain; its full sequence is Gamma-aminobutyric acid receptor subunit beta-1 (474 aa).

Positions 1–25 (MWTVQNRESLGLLSFPVMITMVCCA) are cleaved as a signal peptide. The Extracellular portion of the chain corresponds to 26-245 (HSTNEPSNMS…SFRLKRNIGY (220 aa)). Residue Asn105 is glycosylated (N-linked (GlcNAc...) asparagine). Tyr122 is a binding site for histamine. A disulfide bond links Cys161 and Cys175. The N-linked (GlcNAc...) asparagine glycan is linked to Asn174. Histamine contacts are provided by residues 181–182 (SY) and Thr227. 4-aminobutanoate contacts are provided by Tyr182 and Thr227. Transmembrane regions (helical) follow at residues 246 to 267 (FILQ…SFWI), 271 to 293 (ASAA…STHL), and 305 to 327 (AIDI…YAFV). Residues 328-451 (NYIFFGKGPQ…DLTDVNSIDK (124 aa)) are Cytoplasmic-facing. Residues 452 to 473 (WSRMFFPITFSLFNVVYWLYYV) form a helical membrane-spanning segment.

Belongs to the ligand-gated ion channel (TC 1.A.9) family. Gamma-aminobutyric acid receptor (TC 1.A.9.5) subfamily. GABRB1 sub-subfamily. Heteropentamer, formed by a combination of alpha (GABRA1-6), beta (GABRB1-3), gamma (GABRG1-3), delta (GABRD), epsilon (GABRE), rho (GABRR1-3), pi (GABRP) and theta (GABRQ) chains, each subunit exhibiting distinct physiological and pharmacological properties. Binds UBQLN1.

It localises to the postsynaptic cell membrane. It is found in the cell membrane. It catalyses the reaction chloride(in) = chloride(out). With respect to regulation, potentiated by etomidate, propofol, pregnanolone and flurazepam. Potentiated by histamine. Its function is as follows. Beta subunit of the heteropentameric ligand-gated chloride channel gated by gamma-aminobutyric acid (GABA), a major inhibitory neurotransmitter in the brain. GABA-gated chloride channels, also named GABA(A) receptors (GABAAR), consist of five subunits arranged around a central pore and contain one or two GABA active binding sites located at the alpha and beta subunit interfaces, depending on subunit composition. When activated by GABA, GABAARs selectively allow the flow of chloride anions across the cell membrane down their electrochemical gradient. Chloride influx into the postsynaptic neuron following GABAAR opening decreases the neuron ability to generate a new action potential, thereby reducing nerve transmission. Beta-containing GABAARs can simultaneously bind GABA and histamine where histamine binds at the interface of two neighboring beta subunits, which may be involved in the regulation of sleep and wakefulness. The chain is Gamma-aminobutyric acid receptor subunit beta-1 from Homo sapiens (Human).